The following is a 1141-amino-acid chain: Isoleucine--tRNA ligase (1141 aa).

The short motif at 50–60 (PSANGMPGIHH) is the 'HIGH' region element. The 'KMSKS' region motif lies at 689 to 693 (KMSKR). K692 is an ATP binding site.

The protein belongs to the class-I aminoacyl-tRNA synthetase family. IleS type 2 subfamily. In terms of assembly, monomer. The cofactor is Zn(2+).

Its subcellular location is the cytoplasm. It carries out the reaction tRNA(Ile) + L-isoleucine + ATP = L-isoleucyl-tRNA(Ile) + AMP + diphosphate. In terms of biological role, catalyzes the attachment of isoleucine to tRNA(Ile). As IleRS can inadvertently accommodate and process structurally similar amino acids such as valine, to avoid such errors it has two additional distinct tRNA(Ile)-dependent editing activities. One activity is designated as 'pretransfer' editing and involves the hydrolysis of activated Val-AMP. The other activity is designated 'posttransfer' editing and involves deacylation of mischarged Val-tRNA(Ile). The protein is Isoleucine--tRNA ligase of Bacteroides fragilis (strain YCH46).